Here is a 274-residue protein sequence, read N- to C-terminus: Exosome complex component Rrp42 (274 aa).

Belongs to the RNase PH family. Rrp42 subfamily. As to quaternary structure, component of the archaeal exosome complex. Forms a hexameric ring-like arrangement composed of 3 Rrp41-Rrp42 heterodimers. The hexameric ring associates with a trimer of Rrp4 and/or Csl4 subunits.

It localises to the cytoplasm. Its function is as follows. Non-catalytic component of the exosome, which is a complex involved in RNA degradation. Contributes to the structuring of the Rrp41 active site. The polypeptide is Exosome complex component Rrp42 (Pyrobaculum aerophilum (strain ATCC 51768 / DSM 7523 / JCM 9630 / CIP 104966 / NBRC 100827 / IM2)).